Here is a 557-residue protein sequence, read N- to C-terminus: uncharacterized protein (557 aa).

The stretch at 2 to 45 forms a coiled coil; the sequence is NEDETSILNKKMEKIEVEMAEFERLGAEREKEAVERIVQEENQN. Disordered stretches follow at residues 39–62, 101–127, 356–402, and 536–557; these read VQEENQNPEVPSNDDASTDIKSRK, NRTYYKNSQGYRRKPKRDDYNNNRKNF, PSPS…YPSN, and ANATSQPLSNLDTGGSAPYDHI. 4 stretches are compositionally biased toward polar residues: residues 101-110, 358-380, 390-400, and 536-548; these read NRTYYKNSQG, PSFQEEFPSTSKSPSATPGSSNA, DSATYPTSIYP, and ANATSQPLSNLDT.

Its subcellular location is the cytoplasm. It is found in the nucleus. This is an uncharacterized protein from Schizosaccharomyces pombe (strain 972 / ATCC 24843) (Fission yeast).